A 320-amino-acid chain; its full sequence is Ferrochelatase (320 aa).

Fe cation is bound by residues His194 and Glu275.

The protein belongs to the ferrochelatase family. As to quaternary structure, monomer.

It is found in the cytoplasm. The catalysed reaction is heme b + 2 H(+) = protoporphyrin IX + Fe(2+). It functions in the pathway porphyrin-containing compound metabolism; protoheme biosynthesis; protoheme from protoporphyrin-IX: step 1/1. Its function is as follows. Catalyzes the ferrous insertion into protoporphyrin IX. This is Ferrochelatase from Shigella dysenteriae serotype 1 (strain Sd197).